The sequence spans 355 residues: Guanine nucleotide-binding protein G(i) subunit alpha-2 (355 aa).

A lipid anchor (N-myristoyl glycine) is attached at glycine 2. Residue cysteine 3 is the site of S-palmitoyl cysteine attachment. Residues 32–355 (REVKLLLLGA…KNNLKDCGLF (324 aa)) enclose the G-alpha domain. Positions 35-48 (KLLLLGAGESGKST) are G1 motif. GTP contacts are provided by residues 40 to 47 (GAGESGKS), 176 to 182 (LRTRVKT), 201 to 205 (DVGGQ), 270 to 273 (NKKD), and alanine 327. Serine 47 lines the Mg(2+) pocket. A G2 motif region spans residues 174–182 (DVLRTRVKT). Arginine 179 carries the ADP-ribosylarginine; by cholera toxin modification. Mg(2+) is bound at residue threonine 182. The segment at 197–206 (FKMFDVGGQR) is G3 motif. Deamidated glutamine; by Photorhabdus PAU_02230 is present on glutamine 205. A G4 motif region spans residues 266 to 273 (ILFLNKKD). The interval 325 to 330 (TCATDT) is G5 motif. ADP-ribosylcysteine; by pertussis toxin is present on cysteine 352.

The protein belongs to the G-alpha family. G(i/o/t/z) subfamily. As to quaternary structure, g proteins are composed of 3 units; alpha, beta and gamma. The alpha chain contains the guanine nucleotide binding site. In this context, interacts with GNB2. Interacts with GPSM1. Interacts with RGS12 and RGS14. Interacts with UNC5B. Interacts (inactive GDP-bound form) with NUCB1 (via GBA motif); the interaction leads to activation of GNAI3. Interacts (inactive GDP-bound form) with CCDC88C/DAPLE (via GBA motif). Interacts (inactive GDP-bound form) with CCDC8A/GIV (via GBA motif). Interacts with CXCR1 and CXCR2. In terms of processing, (Microbial infection) Deamidated at Gln-205 by Photorhabdus asymbiotica toxin PAU_02230, blocking GTP hydrolysis of heterotrimeric GNAQ or GNA11 and G-alphai (GNAI1, GNAI2 or GNAI3) proteins, thereby activating RhoA.

It localises to the cytoplasm. The protein resides in the cytoskeleton. The protein localises to the microtubule organizing center. It is found in the centrosome. Its subcellular location is the cell membrane. It localises to the membrane. Its function is as follows. Guanine nucleotide-binding proteins (G proteins) are involved as modulators or transducers in various transmembrane signaling systems. The G(i) proteins are involved in hormonal regulation of adenylate cyclase: they inhibit the cyclase in response to beta-adrenergic stimuli. May play a role in cell division. In terms of biological role, regulates the cell surface density of dopamine receptors DRD2 by sequestrating them as an intracellular pool. This is Guanine nucleotide-binding protein G(i) subunit alpha-2 (GNAI2) from Homo sapiens (Human).